A 391-amino-acid polypeptide reads, in one-letter code: UPF0229 protein BCA_0588 (391 aa).

A compositionally biased stretch (polar residues) spans 1–16 (MGEENQPNYTISQENW). Disordered regions lie at residues 1–31 (MGEE…RHQE) and 80–117 (HVGQ…GDAA). The segment covering 21–31 (KGYDDQQRHQE) has biased composition (basic and acidic residues). Residues 98–115 (GSGGQKQKGPGKGQGAGD) show a composition bias toward gly residues.

It belongs to the UPF0229 family.

The protein is UPF0229 protein BCA_0588 of Bacillus cereus (strain 03BB102).